Consider the following 434-residue polypeptide: Glucose-1-phosphate adenylyltransferase (434 aa).

Residues Tyr112, Gly178, 193 to 194, and Ser211 contribute to the alpha-D-glucose 1-phosphate site; that span reads EK.

This sequence belongs to the bacterial/plant glucose-1-phosphate adenylyltransferase family. Homotetramer.

It catalyses the reaction alpha-D-glucose 1-phosphate + ATP + H(+) = ADP-alpha-D-glucose + diphosphate. It functions in the pathway glycan biosynthesis; glycogen biosynthesis. Its function is as follows. Involved in the biosynthesis of ADP-glucose, a building block required for the elongation reactions to produce glycogen. Catalyzes the reaction between ATP and alpha-D-glucose 1-phosphate (G1P) to produce pyrophosphate and ADP-Glc. This Mannheimia succiniciproducens (strain KCTC 0769BP / MBEL55E) protein is Glucose-1-phosphate adenylyltransferase.